A 170-amino-acid polypeptide reads, in one-letter code: Adenine phosphoribosyltransferase (170 aa).

This sequence belongs to the purine/pyrimidine phosphoribosyltransferase family. In terms of assembly, homodimer.

It is found in the cytoplasm. The enzyme catalyses AMP + diphosphate = 5-phospho-alpha-D-ribose 1-diphosphate + adenine. It participates in purine metabolism; AMP biosynthesis via salvage pathway; AMP from adenine: step 1/1. Functionally, catalyzes a salvage reaction resulting in the formation of AMP, that is energically less costly than de novo synthesis. This Thermosipho africanus (strain TCF52B) protein is Adenine phosphoribosyltransferase.